Reading from the N-terminus, the 186-residue chain is Peptide deformylase (186 aa).

Fe cation is bound by residues Cys-113 and His-156. Residue Glu-157 is part of the active site. His-160 contacts Fe cation.

This sequence belongs to the polypeptide deformylase family. The cofactor is Fe(2+).

It catalyses the reaction N-terminal N-formyl-L-methionyl-[peptide] + H2O = N-terminal L-methionyl-[peptide] + formate. In terms of biological role, removes the formyl group from the N-terminal Met of newly synthesized proteins. Requires at least a dipeptide for an efficient rate of reaction. N-terminal L-methionine is a prerequisite for activity but the enzyme has broad specificity at other positions. In Lactiplantibacillus plantarum (strain ATCC BAA-793 / NCIMB 8826 / WCFS1) (Lactobacillus plantarum), this protein is Peptide deformylase.